Here is a 131-residue protein sequence, read N- to C-terminus: D-ribose pyranase (131 aa).

Histidine 20 serves as the catalytic Proton donor. Residues aspartate 28, histidine 98, and 120–122 each bind substrate; that span reads YAN.

Belongs to the RbsD / FucU family. RbsD subfamily. Homodecamer.

It is found in the cytoplasm. It catalyses the reaction beta-D-ribopyranose = beta-D-ribofuranose. Its pathway is carbohydrate metabolism; D-ribose degradation; D-ribose 5-phosphate from beta-D-ribopyranose: step 1/2. Its function is as follows. Catalyzes the interconversion of beta-pyran and beta-furan forms of D-ribose. In Bacillus cereus (strain AH187), this protein is D-ribose pyranase.